Consider the following 64-residue polypeptide: Endodeoxyribonuclease toxin RalR (64 aa).

It depends on Ca(2+) as a cofactor. The cofactor is Mg(2+).

Inhibited by EDTA. Toxic component of a type I toxin-antitoxin (TA) system. Upon overexpression inhibits growth and reduces colony-forming units in both the presence and absence of the Rac prophage, cells become filamentous. Has deoxyribonuclease activity (probably endonucleolytic), does not digest RNA. Its toxic effects are neutralized by sRNA antitoxin RalA, which is encoded in trans on the opposite DNA strand. Has RAL-like activity. In Escherichia coli (strain K12), this protein is Endodeoxyribonuclease toxin RalR (ralR).